A 153-amino-acid chain; its full sequence is UPF0178 protein Ccel_2994 (153 aa).

This sequence belongs to the UPF0178 family.

The protein is UPF0178 protein Ccel_2994 of Ruminiclostridium cellulolyticum (strain ATCC 35319 / DSM 5812 / JCM 6584 / H10) (Clostridium cellulolyticum).